Reading from the N-terminus, the 354-residue chain is Rhodopsin (354 aa).

Residues 1-36 (MNGTEGPNFYIPMSNKTGVVRSPFDYPQYYLAEPWK) lie on the Extracellular side of the membrane. N-linked (GlcNAc...) (hybrid) asparagine glycosylation is present at asparagine 2. A glycan (N-linked (GlcNAc...) asparagine) is linked at asparagine 15. A helical transmembrane segment spans residues 37 to 61 (YSVLAAYMFLLILLGLPINFMTLYV). The Cytoplasmic portion of the chain corresponds to 62 to 73 (TIQHKKLRTPLN). A helical transmembrane segment spans residues 74–96 (YILLNLGVCNHFMVLCGFTITMY). The Extracellular portion of the chain corresponds to 97–110 (TSLHGYFVFGQTGC). A disulfide bridge connects residues cysteine 110 and cysteine 187. The chain crosses the membrane as a helical span at residues 111–133 (YFEGFFATLGGEIALWSLVVLAI). Positions 134–136 (ERY) match the 'Ionic lock' involved in activated form stabilization motif. The Cytoplasmic portion of the chain corresponds to 134–152 (ERYIVVCKPMSNFRFGENH). Residues 153–173 (AMMGVAFTWIMALACAVPPLF) traverse the membrane as a helical segment. The Extracellular segment spans residues 174-202 (GWSRYIPEGMQCSCGVDYYTLKPEVNNES). The chain crosses the membrane as a helical span at residues 203 to 224 (FVIYMFVVHFLIPLIIISFCYG). Residues 225 to 252 (RLVCTVKEAAAQQQESATTQKAEKEVTR) lie on the Cytoplasmic side of the membrane. A helical transmembrane segment spans residues 253 to 274 (MVIIMVIFFLICWVPYAYVAFY). Over 275-286 (IFTHQGSEFGPI) the chain is Extracellular. The helical transmembrane segment at 287–308 (FMTVPAFFAKSSAIYNPVIYIM) threads the bilayer. Lysine 296 carries the N6-(retinylidene)lysine modification. Residues 309–354 (LNKQFRNCMITTLCCGKNPFGDDDASSAATSKTEATSVSTSQVSPA) are Cytoplasmic-facing. Residues cysteine 322 and cysteine 323 are each lipidated (S-palmitoyl cysteine). Residues 332–354 (DASSAATSKTEATSVSTSQVSPA) are disordered. A compositionally biased stretch (low complexity) spans 334–354 (SSAATSKTEATSVSTSQVSPA).

It belongs to the G-protein coupled receptor 1 family. Opsin subfamily. Post-translationally, contains one covalently linked retinal chromophore. Upon light absorption, the covalently bound 11-cis-retinal is converted to all-trans-retinal. After hydrolysis of the Schiff base and release of the covalently bound all-trans-retinal, active rhodopsin is regenerated by binding of a fresh molecule of 11-cis-retinal. As to expression, detected in retina rod photoreceptor cell outer segments (at protein level). Detected in retina.

Its subcellular location is the membrane. It localises to the cell projection. It is found in the cilium. The protein resides in the photoreceptor outer segment. Functionally, photoreceptor required for image-forming vision at low light intensity. Required for photoreceptor cell viability after birth. Light-induced isomerization of 11-cis to all-trans retinal triggers a conformational change that activates signaling via G-proteins. Subsequent receptor phosphorylation mediates displacement of the bound G-protein alpha subunit by arrestin and terminates signaling. The protein is Rhodopsin (RHO) of Lithobates pipiens (Northern leopard frog).